We begin with the raw amino-acid sequence, 596 residues long: ATP-binding protein Uup (596 aa).

ABC transporter domains lie at 1 to 222 (MSLI…RIEK) and 290 to 516 (FKLD…SKIN). ATP is bound by residues 36-43 (GKNGAGKS) and 322-329 (GDNGCGKS). Residues 519-596 (IKIKNNFKKE…LEKNIINTKI (78 aa)) are C-terminal domain (CTD), binds DNA.

The protein belongs to the ABC transporter superfamily. ABCF family. Uup subfamily.

It is found in the cytoplasm. It catalyses the reaction ATP + H2O = ADP + phosphate + H(+). Its function is as follows. Probably plays a role in ribosome assembly or function. May be involved in resolution of branched DNA intermediates that result from template switching in postreplication gaps. Binds DNA and has ATPase activity. The polypeptide is ATP-binding protein Uup (Buchnera aphidicola subsp. Acyrthosiphon pisum (strain APS) (Acyrthosiphon pisum symbiotic bacterium)).